Here is a 578-residue protein sequence, read N- to C-terminus: Avenacosidase 2 (578 aa).

Residues 1–57 constitute a chloroplast transit peptide; that stretch reads MALLCSALSNSTHPSFRSHIAGANSENLWHLSAHPAQKSKRRCNLTLSSRAAARISS. Residues Q89, H193, and 238-239 contribute to the a beta-D-glucoside site; that span reads NE. The active-site Proton donor is E239. Cysteines 258 and 264 form a disulfide. A beta-D-glucoside contacts are provided by residues Y381, E454, W504, 511–512, and F520; that span reads EW. E454 serves as the catalytic Nucleophile.

It belongs to the glycosyl hydrolase 1 family. As to quaternary structure, heteromultimer with P60A in a 1:1 stoichiometry. Aggregates to form the fibrillar stromacentre.

The protein localises to the plastid. Its subcellular location is the chloroplast stroma. The catalysed reaction is avenacoside B + H2O = 26-desgluco-avenacoside B + D-glucose. Its function is as follows. Beta-glucosidase acting as a preformed defense system. Hydrolyzes the bisdesmosides avenacosides A and B to 26-desgluco-avenacosides exhibiting fungicidal activity. Can use beta-fucoside &gt; beta-glucoside &gt; beta-galactoside &gt; beta-xyloside as substrates, but not alpha-glycosides, beta-thioglucosides and disaccharides. The sequence is that of Avenacosidase 2 (P60B) from Avena sativa (Oat).